Reading from the N-terminus, the 427-residue chain is Enolase (427 aa).

Gln-163 contacts (2R)-2-phosphoglycerate. Glu-205 serves as the catalytic Proton donor. Residues Asp-242, Glu-285, and Asp-312 each coordinate Mg(2+). (2R)-2-phosphoglycerate is bound by residues Lys-337, Arg-366, Ser-367, and Lys-388. Residue Lys-337 is the Proton acceptor of the active site.

The protein belongs to the enolase family. The cofactor is Mg(2+).

The protein resides in the cytoplasm. The protein localises to the secreted. It is found in the cell surface. It carries out the reaction (2R)-2-phosphoglycerate = phosphoenolpyruvate + H2O. It participates in carbohydrate degradation; glycolysis; pyruvate from D-glyceraldehyde 3-phosphate: step 4/5. Catalyzes the reversible conversion of 2-phosphoglycerate (2-PG) into phosphoenolpyruvate (PEP). It is essential for the degradation of carbohydrates via glycolysis. This Polaromonas sp. (strain JS666 / ATCC BAA-500) protein is Enolase.